The sequence spans 631 residues: Transcription factor dibT (631 aa).

The zn(2)-C6 fungal-type DNA-binding region spans 11–38 (CWTCRLRRKRCDSVQPVCGSCQSLEITC). Positions 123-144 (SLADSSASTPSTSSGRPTTLRS) are enriched in low complexity. Disordered regions lie at residues 123–148 (SLAD…SVDR) and 469–488 (GLKD…TSAG).

The protein resides in the nucleus. Transcription factor; part of the gene cluster that mediates the biosynthesis of pestalotiollide B which is part of dibenzodioxocinones, a novel class of inhibitors against cholesterol ester transfer protein (CEPT). Acts as the key transcription factor within the cluster and positively regulates the expression of the cluster genes and the subsequent production of dibenzodioxocinones such as pestalotiollide B, pestalotiollide C, 1',2'-dehydropenicillide, 3'-methoxy-1',2'-dehydropenicillide and 1',2'-epoxy-3',4'-didehydropenicillide. Required for the expression of most PKS genes outside of the dibenzodioxocinones cluster, (43 out of 48 defined PKS genes), and promotes pigmentation of the mycelium and conidia. The protein is Transcription factor dibT of Pestalotiopsis microspora.